A 127-amino-acid polypeptide reads, in one-letter code: Large ribosomal subunit protein bL17 (127 aa).

Belongs to the bacterial ribosomal protein bL17 family. Part of the 50S ribosomal subunit. Contacts protein L32.

This chain is Large ribosomal subunit protein bL17, found in Aeromonas hydrophila subsp. hydrophila (strain ATCC 7966 / DSM 30187 / BCRC 13018 / CCUG 14551 / JCM 1027 / KCTC 2358 / NCIMB 9240 / NCTC 8049).